The sequence spans 81 residues: Sulfur carrier protein TusA (81 aa).

C19 functions as the Cysteine persulfide intermediate in the catalytic mechanism.

This sequence belongs to the sulfur carrier protein TusA family.

It is found in the cytoplasm. In terms of biological role, sulfur carrier protein which probably makes part of a sulfur-relay system. This Shewanella baltica (strain OS185) protein is Sulfur carrier protein TusA.